Here is a 339-residue protein sequence, read N- to C-terminus: D-erythrose-4-phosphate dehydrogenase (339 aa).

Residues 12–13 and Arg81 contribute to the NAD(+) site; that span reads RI. Residues 154 to 156, Arg200, 213 to 214, and Arg236 contribute to the substrate site; these read SCT and TK. The active-site Nucleophile is Cys155. An NAD(+)-binding site is contributed by Asn318.

Belongs to the glyceraldehyde-3-phosphate dehydrogenase family. Epd subfamily. Homotetramer.

The protein resides in the cytoplasm. The enzyme catalyses D-erythrose 4-phosphate + NAD(+) + H2O = 4-phospho-D-erythronate + NADH + 2 H(+). It functions in the pathway cofactor biosynthesis; pyridoxine 5'-phosphate biosynthesis; pyridoxine 5'-phosphate from D-erythrose 4-phosphate: step 1/5. Functionally, catalyzes the NAD-dependent conversion of D-erythrose 4-phosphate to 4-phosphoerythronate. This chain is D-erythrose-4-phosphate dehydrogenase, found in Escherichia coli O45:K1 (strain S88 / ExPEC).